We begin with the raw amino-acid sequence, 310 residues long: GTP-binding protein GTR1 (310 aa).

GTP contacts are provided by Ser15, Gly18, Lys19, Ser20, Ser21, Thr35, Thr41, Gly64, His126, Asp129, and Ile166.

This sequence belongs to the GTR/RAG GTP-binding protein family. In terms of assembly, heterodimer; with GTR2. Component of the GSE complex composed of GTR1, GTR2, SLM4, MEH1 and LTV1. Interacts with GTR2; the interaction is direct. Interacts with TOR1.

Its subcellular location is the vacuole membrane. It carries out the reaction GTP + H2O = GDP + phosphate + H(+). GTPase involved in activation of the TORC1 signaling pathway, which promotes growth and represses autophagy in nutrient-rich conditions. Also required for TORC1 inactivation during nitrogen starvation. Required for intracellular sorting of GAP1 out of the endosome. Functionally associated with the inorganic phosphate transporter PHO84, and may be involved in regulating its function or localization. This chain is GTP-binding protein GTR1 (GTR1), found in Saccharomyces cerevisiae (strain ATCC 204508 / S288c) (Baker's yeast).